A 72-amino-acid polypeptide reads, in one-letter code: Large ribosomal subunit protein uL29 (72 aa).

This sequence belongs to the universal ribosomal protein uL29 family.

In Thermus thermophilus (strain ATCC BAA-163 / DSM 7039 / HB27), this protein is Large ribosomal subunit protein uL29.